A 484-amino-acid chain; its full sequence is Endoglucanase 9 (484 aa).

Positions 1-21 are cleaved as a signal peptide; sequence MTSLFFFVLLFSSLLISNGDA. The active-site Nucleophile is the Asp77. Active-site residues include His402, Asp453, and Glu462.

It belongs to the glycosyl hydrolase 9 (cellulase E) family. Specifically expressed in root cap cells.

It is found in the secreted. The protein localises to the cell wall. The catalysed reaction is Endohydrolysis of (1-&gt;4)-beta-D-glucosidic linkages in cellulose, lichenin and cereal beta-D-glucans.. The chain is Endoglucanase 9 (CEL3) from Arabidopsis thaliana (Mouse-ear cress).